The following is a 117-amino-acid chain: Large ribosomal subunit protein bL20c (117 aa).

The protein belongs to the bacterial ribosomal protein bL20 family.

It is found in the plastid. Its subcellular location is the chloroplast. In terms of biological role, binds directly to 23S ribosomal RNA and is necessary for the in vitro assembly process of the 50S ribosomal subunit. It is not involved in the protein synthesizing functions of that subunit. The sequence is that of Large ribosomal subunit protein bL20c from Platanus occidentalis (Sycamore).